The following is a 1857-amino-acid chain: Fatty acid synthase subunit alpha (1857 aa).

Positions E96–A132 are disordered. Low complexity predominate over residues T102 to A119. The 76-residue stretch at V139–Q214 folds into the Carrier domain. At S174 the chain carries O-(pantetheine 4'-phosphoryl)serine. The tract at residues Q577–K604 is disordered. The tract at residues K648 to T845 is beta-ketoacyl reductase. The Ketosynthase family 3 (KS3) domain occupies L1092–H1633. Residues C1275, H1518, and H1559 each act as for beta-ketoacyl synthase activity in the active site. Mg(2+)-binding residues include D1743, V1744, and E1745. Acetyl-CoA is bound by residues D1743–E1745, Y1769, S1779, E1788–S1798, V1812–N1815, and I1842–H1844. The Mg(2+) site is built by S1843 and H1844.

Belongs to the thiolase-like superfamily. Fungal fatty acid synthetase subunit alpha family. As to quaternary structure, [Alpha(6)beta(6)] hexamers of two multifunctional subunits (alpha and beta).

It carries out the reaction acetyl-CoA + n malonyl-CoA + 2n NADPH + 4n H(+) = a long-chain-acyl-CoA + n CoA + n CO2 + 2n NADP(+).. The catalysed reaction is a fatty acyl-[ACP] + malonyl-[ACP] + H(+) = a 3-oxoacyl-[ACP] + holo-[ACP] + CO2. The enzyme catalyses a (3R)-hydroxyacyl-[ACP] + NADP(+) = a 3-oxoacyl-[ACP] + NADPH + H(+). Its function is as follows. Fatty acid synthetase catalyzes the formation of long-chain fatty acids from acetyl-CoA, malonyl-CoA and NADPH. The alpha subunit contains domains for: acyl carrier protein, 3-oxoacyl-[acyl-carrier-protein] reductase, and 3-oxoacyl-[acyl-carrier-protein] synthase. In Penicillium patulum (Penicillium griseofulvum), this protein is Fatty acid synthase subunit alpha (FAS2).